The chain runs to 613 residues: Ribosome-associated molecular chaperone SSB1 (613 aa).

Positions 1–391 (MAEGVFSGAI…ILTGSNLSDD (391 aa)) are nucleotide binding domain (NBD). ATP is bound by residues 16–18 (TTY), lysine 73, 205–207 (GGT), 271–278 (ERAKRTLS), and glycine 342. The tract at residues 392–402 (TKDLLLLDVAP) is inter-domain linker. The substrate binding domain (SBD) stretch occupies residues 403 to 613 (LSLGVAMQGD…RVVTKAMATR (211 aa)). Residues 516-612 (SEDIEKMVSQ…KRVVTKAMAT (97 aa)) form a lid domain (SBDalpha) region. The Nuclear export signal signature appears at 574–582 (VEAALADAF).

Belongs to the heat shock protein 70 family. Ssb-type Hsp70 subfamily. In terms of assembly, binds to ribosomes. Binds close to the ribosomal tunnel exit via contacts with both ribosomal proteins and rRNA. Directly interacts with nascent polypeptides. This interaction is dependent on the ribosome-associated complex (RAC). Interacts with SSE1. Interacts with FES1.

Its subcellular location is the cytoplasm. It carries out the reaction ATP + H2O = ADP + phosphate + H(+). Functionally, ribosome-bound, Hsp70-type chaperone that assists in the cotranslational folding of newly synthesized proteins in the cytosol. Stimulates folding by interacting with nascent chains, binding to short, largely hydrophobic sequences exposed by unfolded proteins, thereby stabilizing longer, more slowly translated, and aggregation-prone nascent polypeptides and domains that cannot fold stably until fully synthesized. The Hsp70-protein substrate interaction depends on ATP-binding and on allosteric regulation between the NBD and the SBD. The ATP-bound state is characterized by a fast exchange rate of substrate (low affinity state), while in the ADP-bound state exchange is much slower (high affinity state). During the Hsp70 cycle, the chaperone switches between the ATP-bound state (open conformation) and the ADP-bound state (closed conformation) by major conformational rearrangements involving mainly the lid domain. Ssb cooperates with a specific Hsp40/Hsp70 co-chaperone termed the ribosome-associated complex (RAC), which stimulates the ATPase activity of the ribosome-associated pool of Ssbs and switches it to the high affinity substrate binding state. Hsp110 chaperone SSE1 and FES1 act as nucleotide exchange factors that cause substrate release. The polypeptide is Ribosome-associated molecular chaperone SSB1 (SSB1) (Eremothecium gossypii (strain ATCC 10895 / CBS 109.51 / FGSC 9923 / NRRL Y-1056) (Yeast)).